The primary structure comprises 438 residues: MTLTDLETCAEEIATAARTLARDGHSGGYSAGLPDHLRPVQRTLIANASQVLALASQPADLVRQLALYNQLLACLRWLGEFQVLACIPLDESVPFEDVADIAGVPECRLRRLVRPLFTIGFLCEPSPGHVAHSVMSKQFVTQPALLDAILFMSETLAPSASAMGTQTRRFGASEQAEDSAWNMAVGSDSPFAECLQQRPKVKRQLGAYLSYVSSSIDAGVEDTLTRMNWQNLGMATVVHVGAQSPSLVVALAPQFPSLRFLVQTEAKAESGGHQPCLDNHGISALKLASIPLHLRARITWGTRLSTATQPVLDAAVYLISIPFPSPQSPAMEITMRVAQALKAHVEVLRNNSDARLILTLPMSSATRSMDAAARAAVSLSDLSLLQLTNGGSLNMGEIRDLLRSRSDGLVVMREVRSPTNAVIAFEIQYRVDNDDNRY.

Residues 65–134 (LALYNQLLAC…PSPGHVAHSV (70 aa)) form the HTH iclR-type domain. The H-T-H motif DNA-binding region spans 95 to 114 (FEDVADIAGVPECRLRRLVR).

As to quaternary structure, interacts with aflR.

The protein resides in the nucleus. Its function is as follows. Transcription factor; part of the gene cluster that mediates the biosynthesis of aflatoxin, a polyketide-derived furanocoumarin which is part of the most toxic and carcinogenic compounds among the known mycotoxins. AflS exhibits no DNA-binding capability on its own, but forms a complex with the other aflatoxin cluster transcription factor aflR and acts as a modulator of aflR's DNA-binding by decreasing its DNA-binding affinity. The protein is Aflatoxin cluster transcriptional coactivator aflS of Aspergillus flavus (strain ATCC 200026 / FGSC A1120 / IAM 13836 / NRRL 3357 / JCM 12722 / SRRC 167).